A 71-amino-acid chain; its full sequence is UPF0346 protein SAK_1533 (71 aa).

It belongs to the UPF0346 family.

This is UPF0346 protein SAK_1533 from Streptococcus agalactiae serotype Ia (strain ATCC 27591 / A909 / CDC SS700).